Here is a 59-residue protein sequence, read N- to C-terminus: Protein SspF (59 aa).

Belongs to the alpha/beta-type SASP family.

Functionally, may play some important role in either sporulation or the dormant spore. This chain is Protein SspF (sspF), found in Bacillus cereus (strain ATCC 14579 / DSM 31 / CCUG 7414 / JCM 2152 / NBRC 15305 / NCIMB 9373 / NCTC 2599 / NRRL B-3711).